A 239-amino-acid polypeptide reads, in one-letter code: Serine protease SplD (239 aa).

The first 36 residues, 1–36 (MNKNIIIKSIAALTILTSITGVGTTVVDGIQQTAKA), serve as a signal peptide directing secretion. Residues His-75, Asp-114, and Ser-192 each act as charge relay system in the active site.

The protein belongs to the peptidase S1B family.

The protein resides in the secreted. This Staphylococcus aureus (strain COL) protein is Serine protease SplD (splD).